The sequence spans 464 residues: UDP-N-acetylmuramoyl-tripeptide--D-alanyl-D-alanine ligase (464 aa).

ATP is bound at residue 125-131 (GSNGKTT).

The protein belongs to the MurCDEF family. MurF subfamily.

The protein localises to the cytoplasm. It catalyses the reaction D-alanyl-D-alanine + UDP-N-acetyl-alpha-D-muramoyl-L-alanyl-gamma-D-glutamyl-meso-2,6-diaminopimelate + ATP = UDP-N-acetyl-alpha-D-muramoyl-L-alanyl-gamma-D-glutamyl-meso-2,6-diaminopimeloyl-D-alanyl-D-alanine + ADP + phosphate + H(+). It functions in the pathway cell wall biogenesis; peptidoglycan biosynthesis. Involved in cell wall formation. Catalyzes the final step in the synthesis of UDP-N-acetylmuramoyl-pentapeptide, the precursor of murein. This Borreliella burgdorferi (strain ATCC 35210 / DSM 4680 / CIP 102532 / B31) (Borrelia burgdorferi) protein is UDP-N-acetylmuramoyl-tripeptide--D-alanyl-D-alanine ligase.